A 196-amino-acid chain; its full sequence is Nucleoside triphosphate pyrophosphatase (196 aa).

The Proton acceptor role is filled by aspartate 70.

This sequence belongs to the Maf family. A divalent metal cation is required as a cofactor.

Its subcellular location is the cytoplasm. The enzyme catalyses a ribonucleoside 5'-triphosphate + H2O = a ribonucleoside 5'-phosphate + diphosphate + H(+). It catalyses the reaction a 2'-deoxyribonucleoside 5'-triphosphate + H2O = a 2'-deoxyribonucleoside 5'-phosphate + diphosphate + H(+). Nucleoside triphosphate pyrophosphatase. May have a dual role in cell division arrest and in preventing the incorporation of modified nucleotides into cellular nucleic acids. The protein is Nucleoside triphosphate pyrophosphatase of Gloeothece citriformis (strain PCC 7424) (Cyanothece sp. (strain PCC 7424)).